Here is a 55-residue protein sequence, read N- to C-terminus: Small ribosomal subunit protein bS21 (55 aa).

The protein belongs to the bacterial ribosomal protein bS21 family.

This Phytoplasma mali (strain AT) protein is Small ribosomal subunit protein bS21.